The chain runs to 462 residues: Cysteine--tRNA ligase (462 aa).

Cysteine 30 serves as a coordination point for Zn(2+). Residues 32 to 42 carry the 'HIGH' region motif; that stretch reads MTVYDYCHIGH. Zn(2+)-binding residues include cysteine 214, histidine 239, and glutamate 243. Residues 271–275 carry the 'KMSKS' region motif; that stretch reads KMSKS. An ATP-binding site is contributed by lysine 274.

This sequence belongs to the class-I aminoacyl-tRNA synthetase family. As to quaternary structure, monomer. Zn(2+) is required as a cofactor.

Its subcellular location is the cytoplasm. The catalysed reaction is tRNA(Cys) + L-cysteine + ATP = L-cysteinyl-tRNA(Cys) + AMP + diphosphate. In Herminiimonas arsenicoxydans, this protein is Cysteine--tRNA ligase.